Consider the following 368-residue polypeptide: L-arabinitol 4-dehydrogenase (368 aa).

Cys-52, His-77, Glu-78, Cys-107, Cys-110, Cys-113, Cys-121, and Glu-162 together coordinate Zn(2+). Residues Asp-210, Arg-215, and Ile-282 each contribute to the NAD(+) site.

The protein belongs to the zinc-containing alcohol dehydrogenase family. As to quaternary structure, homotetramer. Zn(2+) is required as a cofactor.

The catalysed reaction is L-arabinitol + NAD(+) = L-xylulose + NADH + H(+). Its function is as follows. Plays a key role in liamocins biosynthesis by providing the arabinol moity that is linked to 3,5-dihydroxydecanoic acid (provided by the HR-PKS PKS1) via ester bond formation catalyzed by the esterase EST1. In Aureobasidium melanogenum (Aureobasidium pullulans var. melanogenum), this protein is L-arabinitol 4-dehydrogenase.